A 607-amino-acid chain; its full sequence is Phosphatidylinositol 4-kinase LSB6 (607 aa).

The span at 73 to 88 (NVPSESPRPDQTSGSN) shows a compositional bias: polar residues. The segment at 73–93 (NVPSESPRPDQTSGSNPAVGL) is disordered. In terms of domain architecture, PI3K/PI4K catalytic spans 161-522 (GRELERIQTG…LVRRTRCQVI (362 aa)). The segment at 167–173 (IQTGSSG) is G-loop. Residues 318–356 (KSSGEDINHKPETTRNLTDETEPSKQINSSPISTESEEN) form a disordered region. Basic and acidic residues predominate over residues 319–330 (SSGEDINHKPET). The segment covering 341 to 351 (SKQINSSPIST) has biased composition (polar residues). Positions 384–392 (RNTDRGLDN) are catalytic loop. Residues 411–431 (AIDNGLSFPWKHPDEWRLYPY) are activation loop.

Belongs to the PI3/PI4-kinase family. In terms of assembly, interacts with LAS17. It depends on Mg(2+) as a cofactor. Requires Mn(2+) as cofactor.

Its subcellular location is the cell membrane. It is found in the vacuole membrane. The enzyme catalyses a 1,2-diacyl-sn-glycero-3-phospho-(1D-myo-inositol) + ATP = a 1,2-diacyl-sn-glycero-3-phospho-(1D-myo-inositol 4-phosphate) + ADP + H(+). Its function is as follows. May play a role in endocytic and/or exocytic pathways. In Saccharomyces cerevisiae (strain ATCC 204508 / S288c) (Baker's yeast), this protein is Phosphatidylinositol 4-kinase LSB6 (LSB6).